A 413-amino-acid chain; its full sequence is Serine hydroxymethyltransferase (413 aa).

Residues leucine 119 and 123-125 (GHL) contribute to the (6S)-5,6,7,8-tetrahydrofolate site. Lysine 228 bears the N6-(pyridoxal phosphate)lysine mark. Glutamate 243 is a binding site for (6S)-5,6,7,8-tetrahydrofolate.

This sequence belongs to the SHMT family. In terms of assembly, homodimer. Pyridoxal 5'-phosphate serves as cofactor.

The protein localises to the cytoplasm. The enzyme catalyses (6R)-5,10-methylene-5,6,7,8-tetrahydrofolate + glycine + H2O = (6S)-5,6,7,8-tetrahydrofolate + L-serine. The protein operates within one-carbon metabolism; tetrahydrofolate interconversion. It participates in amino-acid biosynthesis; glycine biosynthesis; glycine from L-serine: step 1/1. In terms of biological role, catalyzes the reversible interconversion of serine and glycine with tetrahydrofolate (THF) serving as the one-carbon carrier. This reaction serves as the major source of one-carbon groups required for the biosynthesis of purines, thymidylate, methionine, and other important biomolecules. Also exhibits THF-independent aldolase activity toward beta-hydroxyamino acids, producing glycine and aldehydes, via a retro-aldol mechanism. The protein is Serine hydroxymethyltransferase of Desulforamulus reducens (strain ATCC BAA-1160 / DSM 100696 / MI-1) (Desulfotomaculum reducens).